The following is a 147-amino-acid chain: Large ribosomal subunit protein uL16 (147 aa).

This sequence belongs to the universal ribosomal protein uL16 family. As to quaternary structure, part of the 50S ribosomal subunit.

Binds 23S rRNA and is also seen to make contacts with the A and possibly P site tRNAs. The chain is Large ribosomal subunit protein uL16 from Finegoldia magna (strain ATCC 29328 / DSM 20472 / WAL 2508) (Peptostreptococcus magnus).